The primary structure comprises 1017 residues: Type VI secretion system spike protein VgrG3 (1017 aa).

Asp-842 is a catalytic residue.

It belongs to the VgrG protein family. As to quaternary structure, interacts with TsiV3. Interacts with TseL.

The protein resides in the secreted. In terms of biological role, part of the type VI secretion system specialized secretion system, which delivers several virulence factors in both prokaryotic and eukaryotic cells during infection. Forms the spike at the tip of the elongating tube formed by haemolysin co-regulated protein Hcp. Allows the delivery of the TseL antibacterial toxin to target cells where it exerts its toxicity. Additionally, acts directly as an effector and targets the cell wall peptidoglycan layer of prey cells for degradation via its C-terminus. Toxicity is counteracted by a cognate immunity protein TsiV3. This is Type VI secretion system spike protein VgrG3 from Vibrio cholerae serotype O1 (strain ATCC 39315 / El Tor Inaba N16961).